Reading from the N-terminus, the 232-residue chain is 5'-methylthioadenosine/S-adenosylhomocysteine nucleosidase (232 aa).

The Proton acceptor role is filled by E12. Residues G78, I152, and M173 to E174 each bind substrate. D197 acts as the Proton donor in catalysis.

This sequence belongs to the PNP/UDP phosphorylase family. MtnN subfamily. As to quaternary structure, homodimer.

The enzyme catalyses S-adenosyl-L-homocysteine + H2O = S-(5-deoxy-D-ribos-5-yl)-L-homocysteine + adenine. The catalysed reaction is S-methyl-5'-thioadenosine + H2O = 5-(methylsulfanyl)-D-ribose + adenine. It catalyses the reaction 5'-deoxyadenosine + H2O = 5-deoxy-D-ribose + adenine. Its pathway is amino-acid biosynthesis; L-methionine biosynthesis via salvage pathway; S-methyl-5-thio-alpha-D-ribose 1-phosphate from S-methyl-5'-thioadenosine (hydrolase route): step 1/2. In terms of biological role, catalyzes the irreversible cleavage of the glycosidic bond in both 5'-methylthioadenosine (MTA) and S-adenosylhomocysteine (SAH/AdoHcy) to adenine and the corresponding thioribose, 5'-methylthioribose and S-ribosylhomocysteine, respectively. Also cleaves 5'-deoxyadenosine, a toxic by-product of radical S-adenosylmethionine (SAM) enzymes, into 5-deoxyribose and adenine. Thus, is required for in vivo function of the radical SAM enzymes biotin synthase and lipoic acid synthase, that are inhibited by 5'-deoxyadenosine accumulation. The polypeptide is 5'-methylthioadenosine/S-adenosylhomocysteine nucleosidase (Klebsiella pneumoniae subsp. pneumoniae (strain ATCC 700721 / MGH 78578)).